The primary structure comprises 550 residues: CTP synthase (550 aa).

The interval 1–266 (MNVNYIFVTG…DEYICKYFNL (266 aa)) is amidoligase domain. Serine 14 contacts CTP. A UTP-binding site is contributed by serine 14. Residues 15–20 (SLGKGI) and aspartate 72 contribute to the ATP site. Positions 72 and 140 each coordinate Mg(2+). Residues 147–149 (DIE), 187–192 (KTKPTQ), and lysine 223 contribute to the CTP site. UTP-binding positions include 187 to 192 (KTKPTQ) and lysine 223. A Glutamine amidotransferase type-1 domain is found at 291–546 (TIGIVGKYIR…INAAIQYQCK (256 aa)). Glycine 353 is a binding site for L-glutamine. Cysteine 380 functions as the Nucleophile; for glutamine hydrolysis in the catalytic mechanism. Residues 381-384 (LGMQ), glutamate 404, and arginine 474 each bind L-glutamine. Residues histidine 519 and glutamate 521 contribute to the active site.

Belongs to the CTP synthase family. In terms of assembly, homotetramer.

The enzyme catalyses UTP + L-glutamine + ATP + H2O = CTP + L-glutamate + ADP + phosphate + 2 H(+). It carries out the reaction L-glutamine + H2O = L-glutamate + NH4(+). The catalysed reaction is UTP + NH4(+) + ATP = CTP + ADP + phosphate + 2 H(+). It participates in pyrimidine metabolism; CTP biosynthesis via de novo pathway; CTP from UDP: step 2/2. Its activity is regulated as follows. Allosterically activated by GTP, when glutamine is the substrate; GTP has no effect on the reaction when ammonia is the substrate. The allosteric effector GTP functions by stabilizing the protein conformation that binds the tetrahedral intermediate(s) formed during glutamine hydrolysis. Inhibited by the product CTP, via allosteric rather than competitive inhibition. In terms of biological role, catalyzes the ATP-dependent amination of UTP to CTP with either L-glutamine or ammonia as the source of nitrogen. Regulates intracellular CTP levels through interactions with the four ribonucleotide triphosphates. The sequence is that of CTP synthase from Blochmanniella floridana.